Here is a 458-residue protein sequence, read N- to C-terminus: UDP-N-acetylmuramate--L-alanine ligase (458 aa).

ATP is bound at residue 115–121 (GSHGKTT).

Belongs to the MurCDEF family.

It localises to the cytoplasm. The catalysed reaction is UDP-N-acetyl-alpha-D-muramate + L-alanine + ATP = UDP-N-acetyl-alpha-D-muramoyl-L-alanine + ADP + phosphate + H(+). Its pathway is cell wall biogenesis; peptidoglycan biosynthesis. In terms of biological role, cell wall formation. This chain is UDP-N-acetylmuramate--L-alanine ligase, found in Anaeromyxobacter sp. (strain Fw109-5).